Reading from the N-terminus, the 342-residue chain is Peptide chain release factor 1 (342 aa).

Residue Gln-211 is modified to N5-methylglutamine. Residues 262–282 (KEREISQKRKSQIGTGERSEK) form a disordered region.

This sequence belongs to the prokaryotic/mitochondrial release factor family. Post-translationally, methylated by PrmC. Methylation increases the termination efficiency of RF1.

Its subcellular location is the cytoplasm. Peptide chain release factor 1 directs the termination of translation in response to the peptide chain termination codons UAG and UAA. In Thermotoga maritima (strain ATCC 43589 / DSM 3109 / JCM 10099 / NBRC 100826 / MSB8), this protein is Peptide chain release factor 1 (prfA).